Here is a 787-residue protein sequence, read N- to C-terminus: Vacuolar protein sorting-associated protein 35A (787 aa).

Methionine 1 carries the N-acetylmethionine modification.

It belongs to the VPS35 family. As to quaternary structure, component of the retromer complex which consists of VPS29 (MAG1), VPS26 (VPS26A or VPS26B), VPS35 (VPS35A or VPS35B or VPS35C), VPS5/17 (SNX1 or SNX2A or SNX2B). Component of a retromer subcomplex consisting of VPS29 (MAG1), VPS26 (VPS26A or VPS26B), VPS35 (VPS35A or VPS35B or VPS35C). Interacts with RABG3F.

Its subcellular location is the cytoplasm. The protein resides in the endosome membrane. It localises to the prevacuolar compartment membrane. It is found in the golgi apparatus. The protein localises to the trans-Golgi network membrane. Plays a role in vesicular protein sorting. Component of the membrane-associated retromer complex which is essential in endosome-to-Golgi retrograde transport. Also involved in the efficient sorting of seed storage proteins. Binds alone to endosomal membranes and is required for recruitment of VPS26 and VPS29 to membrane. The VPS29-VPS26-VPS35 subcomplex may be involved in recycling of specific cargos from endosome to the plasma membrane. This is Vacuolar protein sorting-associated protein 35A (VPS35A) from Arabidopsis thaliana (Mouse-ear cress).